The sequence spans 393 residues: Short-chain dehydrogenase/reductase family 42E member 1 (393 aa).

Y152 serves as the catalytic Proton acceptor. K156 contributes to the NAD(+) binding site. 2 consecutive transmembrane segments (helical) span residues 282–302 (LPLTLVYCFAFLTEMVHFILG) and 371–391 (GLLVFLLIIAVLMWLPSSVIL).

The protein belongs to the 3-beta-HSD family.

It is found in the membrane. In Homo sapiens (Human), this protein is Short-chain dehydrogenase/reductase family 42E member 1 (SDR42E1).